Consider the following 189-residue polypeptide: Peptidyl-tRNA hydrolase (189 aa).

Tyrosine 15 is a binding site for tRNA. Catalysis depends on histidine 20, which acts as the Proton acceptor. Positions 66, 68, and 114 each coordinate tRNA.

This sequence belongs to the PTH family. Monomer.

The protein localises to the cytoplasm. It catalyses the reaction an N-acyl-L-alpha-aminoacyl-tRNA + H2O = an N-acyl-L-amino acid + a tRNA + H(+). In terms of biological role, hydrolyzes ribosome-free peptidyl-tRNAs (with 1 or more amino acids incorporated), which drop off the ribosome during protein synthesis, or as a result of ribosome stalling. Its function is as follows. Catalyzes the release of premature peptidyl moieties from peptidyl-tRNA molecules trapped in stalled 50S ribosomal subunits, and thus maintains levels of free tRNAs and 50S ribosomes. This chain is Peptidyl-tRNA hydrolase, found in Streptococcus equi subsp. zooepidemicus (strain H70).